The chain runs to 647 residues: Protein cueball (647 aa).

An N-terminal signal peptide occupies residues 1–22 (MLWCPSVLVPLIAVAACLPVLA). Residues 23–534 (IGTPLEWEFA…CMTPSPWTSN (512 aa)) are Extracellular-facing. N-linked (GlcNAc...) asparagine glycans are attached at residues N80 and N106. 3 LDL-receptor class B repeats span residues 119–166 (RNLF…DVCR), 167–211 (RKLY…DQLS), and 212–257 (DRIF…TNDA). N175 carries N-linked (GlcNAc...) asparagine glycosylation. An N-linked (GlcNAc...) asparagine glycan is attached at N316. EGF-like domains follow at residues 365-401 (DEKT…SRCE) and 436-473 (EISK…ERCE). 5 disulfide bridges follow: C376/C389, C391/C400, C440/C450, C444/C461, and C463/C472. Residue N475 is glycosylated (N-linked (GlcNAc...) asparagine). Residues 535–555 (VIIVLVLGIVSCFFLVAVIVH) traverse the membrane as a helical segment. Residues 556–647 (GFRRLYKPKR…LIHNMDDDLY (92 aa)) are Cytoplasmic-facing.

This sequence belongs to the cueball family.

The protein resides in the cell membrane. Functionally, has a role in spermatogenesis and oogenesis. The polypeptide is Protein cueball (Drosophila persimilis (Fruit fly)).